The sequence spans 284 residues: Bifunctional protein FolD (284 aa).

NADP(+) is bound by residues 164–166 (GRS) and Ser189.

This sequence belongs to the tetrahydrofolate dehydrogenase/cyclohydrolase family. In terms of assembly, homodimer.

The enzyme catalyses (6R)-5,10-methylene-5,6,7,8-tetrahydrofolate + NADP(+) = (6R)-5,10-methenyltetrahydrofolate + NADPH. The catalysed reaction is (6R)-5,10-methenyltetrahydrofolate + H2O = (6R)-10-formyltetrahydrofolate + H(+). It participates in one-carbon metabolism; tetrahydrofolate interconversion. In terms of biological role, catalyzes the oxidation of 5,10-methylenetetrahydrofolate to 5,10-methenyltetrahydrofolate and then the hydrolysis of 5,10-methenyltetrahydrofolate to 10-formyltetrahydrofolate. This is Bifunctional protein FolD from Listeria innocua serovar 6a (strain ATCC BAA-680 / CLIP 11262).